Reading from the N-terminus, the 601-residue chain is Serine/threonine-protein phosphatase 2A 65 kDa regulatory subunit A beta isoform (601 aa).

N-acetylalanine is present on Ala-2. HEAT repeat units lie at residues 20-58 (DSLY…GVER), 59-96 (TRTE…GGPD), 97-135 (FAHC…TPVA), 136-173 (LEAH…ASNA), 174-212 (VKAE…ELDS), 213-251 (VKTE…SQDD), 252-290 (LEAL…GPKI), 291-333 (ALSD…RETV), 334-372 (IMNQ…GKEN), 373-411 (TIEH…GIRQ), 412-450 (LSQS…GVEF), 451-489 (FDEK…GTEW), 490-528 (AQNT…GKEI), 529-567 (TTKQ…DTNA), and 568-601 (LQGE…LALA).

Belongs to the phosphatase 2A regulatory subunit A family. As to quaternary structure, PP2A consists of a common heterodimeric core enzyme, composed of a 36 kDa catalytic subunit (subunit C) and a 65 kDa constant regulatory subunit (PR65 or subunit A), that associates with a variety of regulatory subunits. Proteins that associate with the core dimer include three families of regulatory subunits B (the R2/B/PR55/B55, R3/B''/PR72/PR130/PR59 and R5/B'/B56 families), the 48 kDa variable regulatory subunit, viral proteins, and cell signaling molecules. Interacts with IPO9. Interacts with SGO1. Interacts with RAF1.

Its function is as follows. The PR65 subunit of protein phosphatase 2A serves as a scaffolding molecule to coordinate the assembly of the catalytic subunit and a variable regulatory B subunit. The polypeptide is Serine/threonine-protein phosphatase 2A 65 kDa regulatory subunit A beta isoform (Ppp2r1b) (Rattus norvegicus (Rat)).